The sequence spans 314 residues: Protein nutcracker (314 aa).

Residues 1 to 62 are disordered; the sequence is MSDTKSEIEG…PRLIQEKSTQ (62 aa). Over residues 21 to 34 the composition is skewed to low complexity; sequence QQQQQPQQQQNEQQ. The segment at 257 to 314 is required for interaction with skpA and Cul1, but not with PI31; sequence MQMEMKLQPSLLGLPDELYFEIFRYLDKSQLNVVARVNRHLHFYSKEVERKRLKGGRS. Positions 264-309 constitute an F-box domain; that stretch reads QPSLLGLPDELYFEIFRYLDKSQLNVVARVNRHLHFYSKEVERKRL.

Component of an SCF (SKP1-CUL1-F-box protein) E3 ubiquitin-protein ligase complex, at least composed of ntc, skpA and Cul1. Interacts (via F-box domain) with skpA and Cul1. Interacts with Prosalpha7 and PI31. Interacts with Bruce. As to expression, expressed in testis (at protein level).

The protein localises to the cytoplasm. Functionally, functions together with PI31 to control non-apoptotic caspase activation during sperm individualization. Positively regulates PI31 stability. In Drosophila melanogaster (Fruit fly), this protein is Protein nutcracker.